A 326-amino-acid polypeptide reads, in one-letter code: Probable iron chelatin transport system permease protein HP_0889 (326 aa).

Transmembrane regions (helical) follow at residues 7 to 27 (IALACVILAVVVLLFGGESLS), 64 to 84 (ILALLVGASLSGSGVVMQTIF), 91 to 111 (PFLLGISSGAMLGVAMAIAVV), 113 to 133 (SNIAILAFFGAILASLAVLAM), 142 to 162 (LSLVLSGVVLSAFLSALAGAI), 164 to 184 (FFVIPQKAQAIVVWLLGSLSL), 187 to 207 (YKDCLIAFIGLSLGFIPLFLL), 241 to 261 (VASALAVSVSGTIGWIGLVIP), 275 to 295 (LLLSSLLMGAFFLLLADVVAK), and 301 to 321 (DLPVGIATSVLGAPFFLWLLF).

The protein belongs to the binding-protein-dependent transport system permease family. FecCD subfamily.

It is found in the cell inner membrane. Part of a binding-protein-dependent transport system for an iron chelatin; probably responsible for the translocation of the substrate across the membrane. The chain is Probable iron chelatin transport system permease protein HP_0889 from Helicobacter pylori (strain ATCC 700392 / 26695) (Campylobacter pylori).